Reading from the N-terminus, the 608-residue chain is Tyrosyl-DNA phosphodiesterase 1 (608 aa).

The segment at 1 to 101 (MSQEGDYGRW…SDDELQPEMP (101 aa)) is disordered. Residue S61 is modified to Phosphoserine. The residue at position 147 (T147) is a Phosphothreonine. Residue S148 is modified to Phosphoserine. H263 (nucleophile) is an active-site residue. Substrate is bound at residue K265. An interaction with DNA region spans residues 400–403 (SVGS). The Proton donor/acceptor role is filled by H493. Substrate is bound at residue K495.

The protein belongs to the tyrosyl-DNA phosphodiesterase family. Monomer. Phosphorylated on serine and/or threonine residues, but not on tyrosine residues. In terms of tissue distribution, ubiquitously expressed. Similar expression throughout the central nervous system (whole brain, amygdala, caudate nucleus, cerebellum, cerebral cortex, frontal lobe, hippocampus, medulla oblongata, occipital lobe, putamen, substantia nigra, temporal lobe, thalamus, nucleus accumbens and spinal cord) and increased expression in testis and thymus.

The protein localises to the nucleus. It localises to the cytoplasm. DNA repair enzyme that can remove a variety of covalent adducts from DNA through hydrolysis of a 3'-phosphodiester bond, giving rise to DNA with a free 3' phosphate. Catalyzes the hydrolysis of dead-end complexes between DNA and the topoisomerase I active site tyrosine residue. Hydrolyzes 3'-phosphoglycolates on protruding 3' ends on DNA double-strand breaks due to DNA damage by radiation and free radicals. Acts on blunt-ended double-strand DNA breaks and on single-stranded DNA. Has low 3'exonuclease activity and can remove a single nucleoside from the 3'end of DNA and RNA molecules with 3'hydroxyl groups. Has no exonuclease activity towards DNA or RNA with a 3'phosphate. The polypeptide is Tyrosyl-DNA phosphodiesterase 1 (TDP1) (Homo sapiens (Human)).